A 130-amino-acid chain; its full sequence is Small ribosomal subunit protein uS9 (130 aa).

It belongs to the universal ribosomal protein uS9 family.

In Syntrophobacter fumaroxidans (strain DSM 10017 / MPOB), this protein is Small ribosomal subunit protein uS9.